A 638-amino-acid chain; its full sequence is 1-deoxy-D-xylulose-5-phosphate synthase (638 aa).

Thiamine diphosphate contacts are provided by residues His-79 and 120–122 (GHS). Asp-151 lines the Mg(2+) pocket. Residues 152–153 (GA), Asn-182, Tyr-291, and Glu-373 each bind thiamine diphosphate. Asn-182 contacts Mg(2+).

Belongs to the transketolase family. DXPS subfamily. Homodimer. The cofactor is Mg(2+). It depends on thiamine diphosphate as a cofactor.

The enzyme catalyses D-glyceraldehyde 3-phosphate + pyruvate + H(+) = 1-deoxy-D-xylulose 5-phosphate + CO2. Its pathway is metabolic intermediate biosynthesis; 1-deoxy-D-xylulose 5-phosphate biosynthesis; 1-deoxy-D-xylulose 5-phosphate from D-glyceraldehyde 3-phosphate and pyruvate: step 1/1. Functionally, catalyzes the acyloin condensation reaction between C atoms 2 and 3 of pyruvate and glyceraldehyde 3-phosphate to yield 1-deoxy-D-xylulose-5-phosphate (DXP). The sequence is that of 1-deoxy-D-xylulose-5-phosphate synthase from Xanthomonas campestris pv. campestris (strain 8004).